The chain runs to 393 residues: Phosphopentomutase (393 aa).

6 residues coordinate Mn(2+): Asp-13, Asp-286, His-291, Asp-327, His-328, and His-339.

This sequence belongs to the phosphopentomutase family. It depends on Mn(2+) as a cofactor.

It is found in the cytoplasm. It carries out the reaction 2-deoxy-alpha-D-ribose 1-phosphate = 2-deoxy-D-ribose 5-phosphate. The enzyme catalyses alpha-D-ribose 1-phosphate = D-ribose 5-phosphate. It participates in carbohydrate degradation; 2-deoxy-D-ribose 1-phosphate degradation; D-glyceraldehyde 3-phosphate and acetaldehyde from 2-deoxy-alpha-D-ribose 1-phosphate: step 1/2. Functionally, isomerase that catalyzes the conversion of deoxy-ribose 1-phosphate (dRib-1-P) and ribose 1-phosphate (Rib-1-P) to deoxy-ribose 5-phosphate (dRib-5-P) and ribose 5-phosphate (Rib-5-P), respectively. The polypeptide is Phosphopentomutase (Symbiobacterium thermophilum (strain DSM 24528 / JCM 14929 / IAM 14863 / T)).